The following is a 217-amino-acid chain: GrpE protein homolog 1, mitochondrial (217 aa).

The N-terminal 27 residues, Met-1–Leu-27, are a transit peptide targeting the mitochondrion. The disordered stretch occupies residues Gly-37–Ala-56. The residue at position 94 (Lys-94) is an N6-acetyllysine; alternate. Lys-94 carries the post-translational modification N6-succinyllysine; alternate. Lys-100 carries the post-translational modification N6-acetyllysine. The residue at position 120 (Lys-120) is an N6-succinyllysine. Lys-215 is subject to N6-acetyllysine; alternate. Lys-215 is subject to N6-succinyllysine; alternate.

Belongs to the GrpE family. As to quaternary structure, probable component of the PAM complex at least composed of a mitochondrial HSP70 protein, GRPEL1 or GRPEL2, TIMM44, TIMM16/PAM16 and TIMM14/DNAJC19. Binds to HSP70, HSC70 and HSJ1B.

Its subcellular location is the mitochondrion matrix. Its function is as follows. Essential component of the PAM complex, a complex required for the translocation of transit peptide-containing proteins from the inner membrane into the mitochondrial matrix in an ATP-dependent manner. Seems to control the nucleotide-dependent binding of mitochondrial HSP70 to substrate proteins. This is GrpE protein homolog 1, mitochondrial (Grpel1) from Mus musculus (Mouse).